The sequence spans 487 residues: Arginine ADP-riboxanase OspC3 (487 aa).

Positions 1-14 (MRVETHSPSFTNPN) are enriched in polar residues. The disordered stretch occupies residues 1-41 (MRVETHSPSFTNPNPAEACSGDPTEMGSRLSGVSRAPLPHA). Positions 137, 138, 139, 164, 167, and 168 each coordinate NAD(+). Glu325 is an active-site residue. ANK repeat units lie at residues 368–398 (DAVT…EAKD) and 444–473 (RGDT…DRNL).

The protein belongs to the OspC family.

The protein localises to the secreted. The protein resides in the host cytoplasm. The catalysed reaction is L-arginyl-[protein] + NAD(+) = ADP-riboxanated L-argininyl-[protein] + nicotinamide + NH4(+) + H(+). In terms of biological role, ADP-riboxanase effector that inhibits host cell pyroptosis. Acts by mediating arginine ADP-riboxanation of host CASP4/CASP11, blocking CASP4/CASP11 autoprocessing. This prevents CASP4 activation and ability to recognize and cleave GSDMD, thereby inhibiting LPS-induced pyroptosis. ADP-riboxanation takes place in two steps: OspC3 first catalyzes ADP-ribosylation of target Arg, and then initiates a deamination to remove one N-omega group. The sequence is that of Arginine ADP-riboxanase OspC3 from Chromobacterium sp. (strain ATCC 53434 / SC 14030).